Reading from the N-terminus, the 377-residue chain is MAQQTNVAGQKTEKQRKAPFRADHVGSLLRSVPVKEARQKKAAGEMTAEQLRDIENQEITRIVEKQKEIGLDVVTDGEFRRSWWHYDFLEGLDGVEPFIPAEGIQFHNTKTKARSIKVTGKLDFTSHPALGDYQFLHEIAGNATPKLTIPSPNMLFFGEKADKGIYDDQEEYFHDMAQAYKKAIKAFYDAGCRYLQLDDTSWSLFFEDKGREVVRALGGDPETLPAIFAKTINDAVADRPDDLTITMHICRGNFRSTWAASGGYDAVAETILDGLNLDGLFLEYDDDRSGNFDPLRFVKRKDLQIVLGLITSKYGELENPEDVKRRINEAARFVSLDQLCLSPQCGFASTEEGNLLTEEQQWAKLRHVIDIANDVWR.

Residues 1 to 25 (MAQQTNVAGQKTEKQRKAPFRADHV) are disordered. Basic and acidic residues predominate over residues 11-24 (KTEKQRKAPFRADH).

It to B.subtilis YxjG.

This is an uncharacterized protein from Bacillus subtilis (strain 168).